Consider the following 457-residue polypeptide: Ribosomal protein uS12 methylthiotransferase RimO (457 aa).

An MTTase N-terminal domain is found at 6–116 (PKVGFVSLGC…VMEAVHAALP (111 aa)). [4Fe-4S] cluster-binding residues include Cys-15, Cys-51, Cys-80, Cys-147, Cys-151, and Cys-154. The Radical SAM core domain maps to 133–370 (LTPRHYAYLK…MARQAEISAA (238 aa)). Positions 373 to 441 (EAKIGSVQQC…EHDLFGDALP (69 aa)) constitute a TRAM domain.

The protein belongs to the methylthiotransferase family. RimO subfamily. The cofactor is [4Fe-4S] cluster.

It localises to the cytoplasm. It carries out the reaction L-aspartate(89)-[ribosomal protein uS12]-hydrogen + (sulfur carrier)-SH + AH2 + 2 S-adenosyl-L-methionine = 3-methylsulfanyl-L-aspartate(89)-[ribosomal protein uS12]-hydrogen + (sulfur carrier)-H + 5'-deoxyadenosine + L-methionine + A + S-adenosyl-L-homocysteine + 2 H(+). Catalyzes the methylthiolation of an aspartic acid residue of ribosomal protein uS12. This Xanthomonas campestris pv. campestris (strain 8004) protein is Ribosomal protein uS12 methylthiotransferase RimO.